The sequence spans 518 residues: MLFRFLQTLARFCRFLLISVLGFRFSPLLLLGYVKLQDENKHNSESALASGTDAKQPEAAENVTSSSIDFAVNSVVKVFTVYSMPSVLQPWRNWPQQESGGSGFVISGKKILTNAHVVADHIFLQVRKHGSPTKYKAQVRAIGHECDLAILEIDNEEFWEDMIPLELGEIPSLDESVAVFGYPTGGDSVSITKGYVSRVEYTRYAHGGTTLLAIQTDAAINPGNSGGPAIIGNKMAGVAFQKDPSADNIGYIIPTPVIKHFLTAVEENGQYGGFCTLDISYQLMENSQLRNHFKMGPEMTGILINEINPLSDAYKRLRKDDIILAIDDVLIGNDAKVTFRNKERINFNHFVSMKKLDETVLLQVLRDGKEHEFHIMVKPVPPLVPGHQYDKLPSYYIFAGFVFVPLTQPYIDSTLICNCAIKYMPEKAGEQLVLADDINAGYTDFKNLKVIKVNGVQVENLKHLTELVETCWTEDLRLDLENEKVVVLNYANAKEATSLILELHRIPSANEYDYQWQS.

The N-terminal 23 residues, 1–23, are a transit peptide targeting the mitochondrion; the sequence is MLFRFLQTLARFCRFLLISVLGF. The tract at residues 98–262 is serine protease; sequence ESGGSGFVIS…IPTPVIKHFL (165 aa). Active-site charge relay system residues include H116, D147, and S225. The region spanning 278 to 358 is the PDZ domain; the sequence is DISYQLMENS…HFVSMKKLDE (81 aa).

The protein belongs to the peptidase S1C family.

It is found in the mitochondrion membrane. Putative serine protease. The sequence is that of Protease Do-like 4, mitochondrial (DEGP4) from Arabidopsis thaliana (Mouse-ear cress).